Reading from the N-terminus, the 260-residue chain is Segregation and condensation protein A (260 aa).

This sequence belongs to the ScpA family. Component of a cohesin-like complex composed of ScpA, ScpB and the Smc homodimer, in which ScpA and ScpB bind to the head domain of Smc. The presence of the three proteins is required for the association of the complex with DNA.

It is found in the cytoplasm. In terms of biological role, participates in chromosomal partition during cell division. May act via the formation of a condensin-like complex containing Smc and ScpB that pull DNA away from mid-cell into both cell halves. This Halalkalibacterium halodurans (strain ATCC BAA-125 / DSM 18197 / FERM 7344 / JCM 9153 / C-125) (Bacillus halodurans) protein is Segregation and condensation protein A.